Here is a 512-residue protein sequence, read N- to C-terminus: Kynurenine 3-monooxygenase (512 aa).

The protein belongs to the aromatic-ring hydroxylase family. KMO subfamily. FAD is required as a cofactor.

The protein localises to the mitochondrion outer membrane. It carries out the reaction L-kynurenine + NADPH + O2 + H(+) = 3-hydroxy-L-kynurenine + NADP(+) + H2O. The protein operates within cofactor biosynthesis; NAD(+) biosynthesis; quinolinate from L-kynurenine: step 1/3. In terms of biological role, catalyzes the hydroxylation of L-kynurenine (L-Kyn) to form 3-hydroxy-L-kynurenine (L-3OHKyn). Required for synthesis of quinolinic acid. This Neosartorya fischeri (strain ATCC 1020 / DSM 3700 / CBS 544.65 / FGSC A1164 / JCM 1740 / NRRL 181 / WB 181) (Aspergillus fischerianus) protein is Kynurenine 3-monooxygenase (bna4).